The sequence spans 1187 residues: DNA-directed RNA polymerase subunit beta (1187 aa).

The disordered stretch occupies residues 1150–1187; sequence KDEDDDPASSADDLGFNIGARPDAAAKEDQKAEEPEYQ. The span at 1173–1187 shows a compositional bias: basic and acidic residues; it reads AAAKEDQKAEEPEYQ.

Belongs to the RNA polymerase beta chain family. The RNAP catalytic core consists of 2 alpha, 1 beta, 1 beta' and 1 omega subunit. When a sigma factor is associated with the core the holoenzyme is formed, which can initiate transcription.

The enzyme catalyses RNA(n) + a ribonucleoside 5'-triphosphate = RNA(n+1) + diphosphate. Functionally, DNA-dependent RNA polymerase catalyzes the transcription of DNA into RNA using the four ribonucleoside triphosphates as substrates. The chain is DNA-directed RNA polymerase subunit beta from Bifidobacterium longum (strain DJO10A).